A 187-amino-acid chain; its full sequence is Pumilio homolog 26 (187 aa).

A Pumilio 1; degenerate repeat occupies 20 to 42 (VATEFLRVSNDVAELHKLSSKLT). A Pumilio 2; degenerate repeat occupies 43-78 (SDPYLFVEFVKTIRGFLSVQTALGLSGEIDTVFLQV). A Pumilio 3; degenerate repeat occupies 79-116 (IKGWFPDLITETFSFLIVVRIINLFNKRANSKVYPDIL). Residues 117–154 (RRIGNNALYLTRNPLRGICLVEKAINVRDPDCTVFIAL) form a Pumilio 4; degenerate repeat. Residues 155 to 187 (KLHSHYVELSFEELGSNIVEKLLSVGESGICGV) form a Pumilio 5 repeat.

The protein localises to the cytoplasm. In terms of biological role, sequence-specific RNA-binding protein that regulates translation and mRNA stability by binding the 3'-UTR of target mRNAs. This is Pumilio homolog 26 (APUM26) from Arabidopsis thaliana (Mouse-ear cress).